A 590-amino-acid chain; its full sequence is Guanylate-binding protein 1 (590 aa).

The segment at 1 to 309 (MASEIHMTGP…NAISSGDLPC (309 aa)) is GTPase domain (Globular). The 242-residue stretch at 35 to 276 (TQPVVVVAIV…FCSYIFSNSK (242 aa)) folds into the GB1/RHD3-type G domain. GTP-binding positions include 45-52 (GLYRTGKS), 67-69 (LGS), and 97-101 (DTEGL). At Ser-156 the chain carries Phosphoserine. A Cysteine methyl ester modification is found at Cys-587. Cys-587 carries the S-farnesyl cysteine lipid modification. Thr-588 carries the phosphothreonine modification. A propeptide spans 588–590 (TIS) (removed in mature form).

This sequence belongs to the TRAFAC class dynamin-like GTPase superfamily. GB1/RHD3 GTPase family. GB1 subfamily. In terms of assembly, homodimer; homodimerization occurs upon GTP-binding and is required for the second hydrolysis step from GDP to GMP. Undergoes conformational changes and oligomerization upon GTP-binding and hydrolysis. Heterodimer with other family members, including GBP2, GBP3, GBP4 and GBP5. Dimerization regulates subcellular location to membranous structures. Interacts with SQSTM1. Interacts (when phosphorylated) with 14-3-3 protein sigma (SFN); leading to GBP1 retention in the cytosol and inactivation. Isoprenylation is required for proper subcellular location. Post-translationally, phosphorylated at Ser-156 by PIM1 in absence of infection, inhibits GBP1: phosphorylation promotes interaction with 14-3-3 protein sigma (SFN), leading to GBP1 retention in the cytosol. Dephosphorylated in response to infection, liberating GBP1.

It is found in the cytoplasmic vesicle membrane. The protein localises to the golgi apparatus membrane. Its subcellular location is the cell membrane. It localises to the cytoplasm. The protein resides in the cytosol. It is found in the secreted. The catalysed reaction is GTP + H2O = GDP + phosphate + H(+). The enzyme catalyses GDP + H2O = GMP + phosphate + H(+). Interferon (IFN)-inducible GTPase that plays important roles in innate immunity against a diverse range of bacterial, viral and protozoan pathogens. Hydrolyzes GTP to GMP in two consecutive cleavage reactions: GTP is first hydrolyzed to GDP and then to GMP in a processive manner. Following infection, recruited to the pathogen-containing vacuoles or vacuole-escaped bacteria and promotes both inflammasome assembly and autophagy. Acts as a positive regulator of inflammasome assembly by facilitating the detection of inflammasome ligands from pathogens. Involved in the lysis of pathogen-containing vacuoles, releasing pathogens into the cytosol. Following pathogen release in the cytosol, forms a protein coat in a GTPase-dependent manner that encapsulates pathogens and promotes the detection of ligands by pattern recognition receptors. Plays a key role in inflammasome assembly in response to infection by Gram-negative bacteria: following pathogen release in the cytosol, forms a protein coat that encapsulates Gram-negative bacteria and directly binds to lipopolysaccharide (LPS), disrupting the O-antigen barrier and unmasking lipid A that is that detected by the non-canonical inflammasome effector CASP4/CASP11. Also promotes recruitment of proteins that mediate bacterial cytolysis, leading to release double-stranded DNA (dsDNA) that activates the AIM2 inflammasome. Involved in autophagy by regulating bacteriolytic peptide generation via its interaction with ubiquitin-binding protein SQSTM1, which delivers monoubiquitinated proteins to autolysosomes for the generation of bacteriolytic peptides. Confers protection to several pathogens, including the bacterial pathogens L.monocytogenes and M.bovis BCG as well as the protozoan pathogen T.gondii. Exhibits antiviral activity against influenza virus. The polypeptide is Guanylate-binding protein 1 (GBP1) (Chlorocebus aethiops (Green monkey)).